Here is a 455-residue protein sequence, read N- to C-terminus: tRNA-2-methylthio-N(6)-dimethylallyladenosine synthase (455 aa).

The 119-residue stretch at 18-136 (KLFFIQTYGC…FPEYLNRVKT (119 aa)) folds into the MTTase N-terminal domain. [4Fe-4S] cluster contacts are provided by Cys-27, Cys-63, Cys-97, Cys-173, Cys-177, and Cys-180. Residues 159 to 389 (RKSDIKGFVT…VEIVNTGIAK (231 aa)) form the Radical SAM core domain. The region spanning 392–455 (KDAEGKIYEV…SFSLIGEVEK (64 aa)) is the TRAM domain.

It belongs to the methylthiotransferase family. MiaB subfamily. Monomer. The cofactor is [4Fe-4S] cluster.

It localises to the cytoplasm. The catalysed reaction is N(6)-dimethylallyladenosine(37) in tRNA + (sulfur carrier)-SH + AH2 + 2 S-adenosyl-L-methionine = 2-methylsulfanyl-N(6)-dimethylallyladenosine(37) in tRNA + (sulfur carrier)-H + 5'-deoxyadenosine + L-methionine + A + S-adenosyl-L-homocysteine + 2 H(+). Its function is as follows. Catalyzes the methylthiolation of N6-(dimethylallyl)adenosine (i(6)A), leading to the formation of 2-methylthio-N6-(dimethylallyl)adenosine (ms(2)i(6)A) at position 37 in tRNAs that read codons beginning with uridine. This Clostridium beijerinckii (strain ATCC 51743 / NCIMB 8052) (Clostridium acetobutylicum) protein is tRNA-2-methylthio-N(6)-dimethylallyladenosine synthase.